A 180-amino-acid chain; its full sequence is Probable Brix domain-containing ribosomal biogenesis protein (180 aa).

Positions 1-178 (MTTSRRPSPR…KPAEMVKRGR (178 aa)) constitute a Brix domain.

In terms of biological role, probably involved in the biogenesis of the ribosome. The sequence is that of Probable Brix domain-containing ribosomal biogenesis protein from Aeropyrum pernix (strain ATCC 700893 / DSM 11879 / JCM 9820 / NBRC 100138 / K1).